Reading from the N-terminus, the 1064-residue chain is Ribosome quality control complex subunit NEMF (1064 aa).

At Thr7 the chain carries Phosphothreonine. Positions 296 to 359 (VDEFYSKIEG…LIEMNLQIVD (64 aa)) form a coiled coil. At Ser417 the chain carries Phosphoserine. The interval 420 to 451 (EDGDGDASIENSDAEAPKGKKKKQKNKQLQKP) is disordered. The segment covering 438–447 (GKKKKQKNKQ) has biased composition (basic residues). A coiled-coil region spans residues 481–512 (AAKKTQRTVEAAEKAFKSAEKKTKQTLKEVQT). The span at 694–707 (EQLEGGDSSEEETE) shows a compositional bias: acidic residues. 2 disordered regions span residues 694-718 (EQLE…DVEL) and 731-973 (SGRD…SLTG). Basic and acidic residues predominate over residues 731–756 (SGRDELSSEDGEAKAVTKDQEPIGEM). The residue at position 737 (Ser737) is a Phosphoserine. The segment covering 771 to 781 (IDLSHLQSQRP) has biased composition (polar residues). Positions 828–839 (IEEKDKERESAV) are enriched in basic and acidic residues. A coiled-coil region spans residues 858–882 (KRGQKSKMKKMKEKYKDQDDEDREL). Over residues 859 to 870 (RGQKSKMKKMKE) the composition is skewed to basic residues. Residues 947–959 (DDPHDDKEEHDLD) are compositionally biased toward basic and acidic residues. Residues 960 to 973 (QQGNEENLFDSLTG) are compositionally biased toward polar residues.

It belongs to the NEMF family. In terms of assembly, component of the ribosome quality control complex (RQC), composed of the E3 ubiquitin ligase LTN1, TCF25 and NEMF associated with the 60S ribosomal subunit. The complex probably also contains VCP/p97 and its ubiquitin-binding cofactors. Interacts (via its N-terminus) with XPO1.

The protein localises to the cytoplasm. It localises to the cytosol. The protein resides in the nucleus. Functionally, key component of the ribosome quality control complex (RQC), a ribosome-associated complex that mediates the extraction of incompletely synthesized nascent chains from stalled ribosomes as well as their ubiquitin-mediated proteasomal degradation. Thereby, frees 60S subunit ribosomes from the stalled translation complex and prevents the accumulation of nascent polypeptide chains that are potentially toxic for the cell. Within the RQC complex, NEMF specifically binds stalled 60S ribosomal subunits by recognizing an exposed, nascent chain-conjugated tRNA moiety and promotes the recruitment of LTN1 to stalled 60S subunits. Following binding to stalled 60S ribosomal subunits, NEMF mediates CAT tailing by recruiting alanine-charged tRNA to the A-site and directing the elongation of stalled nascent chains independently of mRNA or 40S subunits, leading to non-templated C-terminal alanine extensions (CAT tails). Mainly recruits alanine-charged tRNAs, but can also other amino acid-charged tRNAs. CAT tailing is required to promote ubiquitination of stalled nascent chains by different E3 ubiquitin-protein ligases. In the canonical RQC pathway (RQC-L), CAT tailing facilitates LTN1-dependent ubiquitination by exposing lysine residues that would otherwise remain buried in the ribosomal exit tunnel. In the alternative RQC pathway (RQC-C) CAT tailing creates an C-degron mainly composed of alanine that is recognized by the CRL2(KLHDC10) and RCHY1/PIRH2 E3 ligases, leading to ubiquitination and degradation of stalled nascent chains. NEMF may also indirectly play a role in nuclear export. In Mus musculus (Mouse), this protein is Ribosome quality control complex subunit NEMF.